The primary structure comprises 326 residues: F-box/LRR-repeat protein 12 (326 aa).

The 47-residue stretch at 1–47 (MATFADLPDSVLLEIFSYLPVRDRIRISRVCHHWKKLVDDRWLWRHV) folds into the F-box domain. LRR repeat units lie at residues 51–78 (LYTM…RMGG), 86–111 (APQL…CLHV), 161–185 (VPAF…VLGG), 186–211 (TYRV…EVLG), 212–236 (CTLS…IRLT), 237–261 (VRGL…CLLG), and 266–291 (PEMP…ELQG).

Interacts with SKP1 and CUL1.

It participates in protein modification; protein ubiquitination. Its function is as follows. Substrate-recognition component of the SCF (SKP1-CUL1-F-box protein)-type E3 ubiquitin ligase complex. Mediates the polyubiquitination and proteasomal degradation of CAMK1 leading to disruption of cyclin D1/CDK4 complex assembly which results in G1 cell cycle arrest in lung epithelia. This Bos taurus (Bovine) protein is F-box/LRR-repeat protein 12 (FBXL12).